A 404-amino-acid polypeptide reads, in one-letter code: Mevalonate kinase (404 aa).

ATP contacts are provided by residues K12, S130, and 135 to 141 (GAGLGSS). Mg(2+) contacts are provided by S141 and E184. D195 serves as the catalytic Proton acceptor.

The protein belongs to the GHMP kinase family. Mevalonate kinase subfamily. In terms of assembly, homodimer. Mg(2+) serves as cofactor.

The protein resides in the cytoplasm. It is found in the nucleus. It catalyses the reaction (R)-mevalonate + ATP = (R)-5-phosphomevalonate + ADP + H(+). It participates in isoprenoid biosynthesis; isopentenyl diphosphate biosynthesis via mevalonate pathway; isopentenyl diphosphate from (R)-mevalonate: step 1/3. Its activity is regulated as follows. Farnesyl pyrophosphate and geranyl pyrophosphate inhibit mevalonate kinase by binding competitively at the ATP-binding site. Its function is as follows. Mevalonate kinase; part of the second module of ergosterol biosynthesis pathway that includes the middle steps of the pathway. Erg12 converts mevalonate into 5-phosphomevalonate. The second module is carried out in the vacuole and involves the formation of farnesyl diphosphate, which is also an important intermediate in the biosynthesis of ubiquinone, dolichol, heme and prenylated proteins. Activity by the mevalonate kinase erg12 first converts mevalonate into 5-phosphomevalonate. 5-phosphomevalonate is then further converted to 5-diphosphomevalonate by the phosphomevalonate kinase erg8. The diphosphomevalonate decarboxylase mvd1 then produces isopentenyl diphosphate. The isopentenyl-diphosphate delta-isomerase idi1 then catalyzes the 1,3-allylic rearrangement of the homoallylic substrate isopentenyl (IPP) to its highly electrophilic allylic isomer, dimethylallyl diphosphate (DMAPP). Finally the farnesyl diphosphate synthase fps1 catalyzes the sequential condensation of isopentenyl pyrophosphate with dimethylallyl pyrophosphate, and then with the resultant geranylpyrophosphate to the ultimate product farnesyl pyrophosphate. The chain is Mevalonate kinase (erg12) from Schizosaccharomyces pombe (strain 972 / ATCC 24843) (Fission yeast).